The following is a 489-amino-acid chain: Serine/threonine-protein kinase BSK2 (489 aa).

The interval 1-30 (MGCLHSKTANLPSSDDPSAPNKPESVNGDQ) is disordered. The N-myristoyl glycine moiety is linked to residue G2. Residues 7–16 (KTANLPSSDD) are compositionally biased toward polar residues. The Protein kinase domain maps to 56 to 322 (SCIVSEGGEK…QEEVASHVLM (267 aa)). ATP contacts are provided by residues 62-70 (GGEKAPNVV) and K84. D178 serves as the catalytic Proton acceptor.

Belongs to the protein kinase superfamily. Ser/Thr protein kinase family. In terms of processing, phosphorylated by BRI1 upon brassinolide (BL) treatment.

It is found in the cell membrane. The enzyme catalyses L-seryl-[protein] + ATP = O-phospho-L-seryl-[protein] + ADP + H(+). It catalyses the reaction L-threonyl-[protein] + ATP = O-phospho-L-threonyl-[protein] + ADP + H(+). Functionally, probable serine/threonine kinase that acts as a positive regulator of brassinosteroid (BR) signaling downstream of the receptor kinase BRI1. Mediates signal transduction from BRI1 by functioning as substrate of BRI1. The polypeptide is Serine/threonine-protein kinase BSK2 (Arabidopsis thaliana (Mouse-ear cress)).